We begin with the raw amino-acid sequence, 446 residues long: Exopolygalacturonase (446 aa).

A signal peptide spans 1-17; sequence MRVTDIISCALLQASIA. 4 N-linked (GlcNAc...) asparagine glycosylation sites follow: asparagine 53, asparagine 118, asparagine 134, and asparagine 204. The PbH1 1 repeat unit spans residues 236–257; sequence SDNIIIQNSNINNGDDCVSFKP. Aspartate 250 functions as the Proton donor in the catalytic mechanism. The cysteines at positions 252 and 269 are disulfide-linked. 2 N-linked (GlcNAc...) asparagine glycosylation sites follow: asparagine 258 and asparagine 270. PbH1 repeat units lie at residues 259 to 279, 290 to 311, and 332 to 353; these read STNI…SVGS, VENI…RIKV, and VRNV…EITQ. The active site involves histidine 273. 5 N-linked (GlcNAc...) asparagine glycosylation sites follow: asparagine 297, asparagine 302, asparagine 334, asparagine 359, and asparagine 369. 2 PbH1 repeats span residues 367-398 and 403-434; these read PSNL…VVCS and CSDI…QSQV. Cystine bridges form between cysteine 397–cysteine 403 and cysteine 424–cysteine 436. Residue asparagine 435 is glycosylated (N-linked (GlcNAc...) asparagine).

This sequence belongs to the glycosyl hydrolase 28 family.

It is found in the secreted. The catalysed reaction is [(1-&gt;4)-alpha-D-galacturonosyl](n) + H2O = alpha-D-galacturonate + [(1-&gt;4)-alpha-D-galacturonosyl](n-1). In terms of biological role, hydrolysis of 1,4-alpha-D-galactosiduronic linkages in pectate and other galacturonans. The protein is Exopolygalacturonase (PGX1) of Cochliobolus carbonum (Maize leaf spot fungus).